Consider the following 451-residue polypeptide: Phosphoglucosamine mutase (451 aa).

S103 functions as the Phosphoserine intermediate in the catalytic mechanism. Mg(2+)-binding residues include S103, D243, D245, and D247. The residue at position 103 (S103) is a Phosphoserine.

It belongs to the phosphohexose mutase family. Mg(2+) is required as a cofactor. Post-translationally, activated by phosphorylation.

It catalyses the reaction alpha-D-glucosamine 1-phosphate = D-glucosamine 6-phosphate. Functionally, catalyzes the conversion of glucosamine-6-phosphate to glucosamine-1-phosphate. This is Phosphoglucosamine mutase from Lactiplantibacillus plantarum (strain ATCC BAA-793 / NCIMB 8826 / WCFS1) (Lactobacillus plantarum).